The sequence spans 429 residues: Argininosuccinate lyase (429 aa).

The protein belongs to the lyase 1 family. Argininosuccinate lyase subfamily.

The protein resides in the cytoplasm. The catalysed reaction is 2-(N(omega)-L-arginino)succinate = fumarate + L-arginine. It participates in amino-acid biosynthesis; L-arginine biosynthesis; L-arginine from L-ornithine and carbamoyl phosphate: step 3/3. The sequence is that of Argininosuccinate lyase from Pyrobaculum arsenaticum (strain DSM 13514 / JCM 11321 / PZ6).